A 1302-amino-acid chain; its full sequence is MWRQSTILAALLVALLCAGSAESKGNRPPRITKQPAPGELLFKVAQQNKESDNPFIIECEADGQPEPEYSWIKNGKKFDWQAYDNRMLRQPGRGTLVITIPKDEDRGHYQCFASNEFGTATSNSVYVRKAELNAFKDEAAKTLEAVEGEPFMLKCAAPDGFPSPTVNWMIQESIDGSIKSINNSRMTLDPEGNLWFSNVTREDASSDFYYACSATSVFRSEYKIGNKVLLDVKQMGVSASQNKHPPVRQYVSRRQSLALRGKRMELFCIYGGTPLPQTVWSKDGQRIQWSDRITQGHYGKSLVIRQTNFDDAGTYTCDVSNGVGNAQSFSIILNVNSVPYFTKEPEIATAAEDEEVVFECRAAGVPEPKISWIHNGKPIEQSTPNPRRTVTDNTIRIINLVKGDTGNYGCNATNSLGYVYKDVYLNVQAEPPTISEAPAAVSTVDGRNVTIKCRVNGSPKPLVKWLRASNWLTGGRYNVQANGDLEIQDVTFSDAGKYTCYAQNKFGEIQADGSLVVKEHTRITQEPQNYEVAAGQSATFRCNEAHDDTLEIEIDWWKDGQSIDFEAQPRFVKTNDNSLTIAKTMELDSGEYTCVARTRLDEATARANLIVQDVPNAPKLTGITCQADKAEIHWEQQGDNRSPILHYTIQFNTSFTPASWDAAYEKVPNTDSSFVVQMSPWANYTFRVIAFNKIGASPPSAHSDSCTTQPDVPFKNPDNVVGQGTEPNNLVISWTPMPEIEHNAPNFHYYVSWKRDIPAAAWENNNIFDWRQNNIVIADQPTFVKYLIKVVAINDRGESNVAAEEVVGYSGEDRPLDAPTNFTMRQITSSTSGYMAWTPVSEESVRGHFKGYKIQTWTENEGEEGLREIHVKGDTHNALVTQFKPDSKNYARILAYNGRFNGPPSAVIDFDTPEGVPSPVQGLDAYPLGSSAFMLHWKKPLYPNGKLTGYKIYYEEVKESYVGERREYDPHITDPRVTRMKMAGLKPNSKYRISITATTKMGEGSEHYIEKTTLKDAVNVAPATPSFSWEQLPSDNGLAKFRINWLPSTEGHPGTHFFTMHRIKGETQWIRENEEKNSDYQEVGGLDPETAYEFRVVSVDGHFNTESATQEIDTNTVEGPIMVANETVANAGWFIGMMLALAFIIILFIIICIIRRNRGGKYDVHDRELANGRRDYPEEGGFHEYSQPLDNKSAGRQSVSSANKPGVESDTDSMAEYGDGDTGQFTEDGSFIGQYVPGKLQPPVSPQPLNNSAAAHQAAPTAGGSGAAGSAAAAGASGGASSAGGAAASNGGAAAGAVATYV.

A signal peptide spans 1–23; the sequence is MWRQSTILAALLVALLCAGSAES. Residues 24-1138 lie on the Extracellular side of the membrane; that stretch reads KGNRPPRITK…ANAGWFIGMM (1115 aa). Ig-like C2-type domains lie at 29-133, 134-225, 245-330, 339-426, 432-524, and 521-610; these read PRIT…AELN, AFKD…YKIG, PPVR…QSFS, PYFT…VYLN, PTIS…TRIT, and TRIT…ANLI. Cystine bridges form between Cys-59-Cys-111, Cys-155-Cys-212, Cys-268-Cys-317, and Cys-360-Cys-410. N-linked (GlcNAc...) asparagine glycosylation is found at Asn-182 and Asn-198. Residues Asn-411 and Asn-448 are each glycosylated (N-linked (GlcNAc...) asparagine). 5 Fibronectin type-III domains span residues 614–711, 716–813, 818–915, 916–1017, and 1021–1119; these read VPNA…TQPD, NPDN…SGED, APTN…TPEG, VPSP…LKDA, and APAT…TVEG. An intrachain disulfide couples Cys-625 to Cys-706. 2 N-linked (GlcNAc...) asparagine glycosylation sites follow: Asn-652 and Asn-683. A glycan (N-linked (GlcNAc...) asparagine) is linked at Asn-821. Asn-1125 is a glycosylation site (N-linked (GlcNAc...) asparagine). Residues 1139-1154 form a helical membrane-spanning segment; that stretch reads LALAFIIILFIIICII. The Cytoplasmic segment spans residues 1155 to 1302; it reads RRNRGGKYDV…AAAGAVATYV (148 aa). Positions 1172-1182 are enriched in basic and acidic residues; the sequence is GRRDYPEEGGF. Disordered stretches follow at residues 1172 to 1223 and 1236 to 1291; these read GRRD…GDTG and VPGK…ASNG. The segment covering 1188–1203 has biased composition (polar residues); that stretch reads PLDNKSAGRQSVSSAN. The segment covering 1253-1275 has biased composition (low complexity); the sequence is AAAHQAAPTAGGSGAAGSAAAAG.

Forms a complex with Nrx-IV/Nrx and Cont. Forms a complex composed of septate junction proteins Nrx-IV/Nrx, Tsf2/MTf, Cont and Nrg during late embryogenesis. Restricted to the surface of neurons and glia in the developing nervous system. As to expression, restricted to non-neuronal tissues.

The protein resides in the cell membrane. It is found in the cell junction. Its subcellular location is the septate junction. Its function is as follows. Essential for septate junctions. Septate junctions, which are the equivalent of vertebrate tight junctions, are characterized by regular arrays of transverse structures that span the intermembrane space and form a physical barrier to diffusion. Required for formation of the hemolymph-brain barrier (the insect blood-brain barrier). Vital for embryonic development. Involved in the targeting for degradation or recycling of certain septate junction components, including kune and bou/boudin, by regulating their endocytosis. Functionally, may play a role in neural and glial cell adhesion in the developing embryo. In terms of biological role, may be a more general cell adhesion molecule involved in non-neuronal tissues and imaginal disk morphogenesis. This chain is Neuroglian (Nrg), found in Drosophila melanogaster (Fruit fly).